Reading from the N-terminus, the 399-residue chain is Leu/Ile/Val-binding protein homolog 7 (399 aa).

A signal peptide spans 1-22 (MEKHLIALSVAALLAGAAPASA).

The protein belongs to the leucine-binding protein family.

In terms of biological role, component of an amino-acid transport system. In Brucella melitensis biotype 1 (strain ATCC 23456 / CCUG 17765 / NCTC 10094 / 16M), this protein is Leu/Ile/Val-binding protein homolog 7.